Reading from the N-terminus, the 334-residue chain is Peroxidase 65 (334 aa).

The signal sequence occupies residues 1–28; it reads MSNMQFSRGFNPFVILFCLAVVAPIISA. 4 disulfide bridges follow: cysteine 42–cysteine 123, cysteine 75–cysteine 80, cysteine 129–cysteine 326, and cysteine 208–cysteine 236. The active-site Proton acceptor is histidine 73. The Ca(2+) site is built by aspartate 74, glycine 79, aspartate 81, and serine 83. Proline 171 lines the substrate pocket. Asparagine 174 carries N-linked (GlcNAc...) asparagine glycosylation. Histidine 201 is a binding site for heme b. Threonine 202 provides a ligand contact to Ca(2+). The N-linked (GlcNAc...) asparagine glycan is linked to asparagine 238. 3 residues coordinate Ca(2+): aspartate 250, threonine 253, and aspartate 258. 2 N-linked (GlcNAc...) asparagine glycosylation sites follow: asparagine 282 and asparagine 294.

The protein belongs to the peroxidase family. Classical plant (class III) peroxidase subfamily. The cofactor is heme b. Requires Ca(2+) as cofactor.

Its subcellular location is the secreted. It catalyses the reaction 2 a phenolic donor + H2O2 = 2 a phenolic radical donor + 2 H2O. In terms of biological role, removal of H(2)O(2), oxidation of toxic reductants, biosynthesis and degradation of lignin, suberization, auxin catabolism, response to environmental stresses such as wounding, pathogen attack and oxidative stress. These functions might be dependent on each isozyme/isoform in each plant tissue. The chain is Peroxidase 65 (PER65) from Arabidopsis thaliana (Mouse-ear cress).